The following is a 427-amino-acid chain: Glutamate-1-semialdehyde 2,1-aminomutase (427 aa).

Lys267 is subject to N6-(pyridoxal phosphate)lysine.

It belongs to the class-III pyridoxal-phosphate-dependent aminotransferase family. HemL subfamily. In terms of assembly, homodimer. Pyridoxal 5'-phosphate is required as a cofactor.

It is found in the cytoplasm. The enzyme catalyses (S)-4-amino-5-oxopentanoate = 5-aminolevulinate. Its pathway is porphyrin-containing compound metabolism; protoporphyrin-IX biosynthesis; 5-aminolevulinate from L-glutamyl-tRNA(Glu): step 2/2. The polypeptide is Glutamate-1-semialdehyde 2,1-aminomutase (Citrifermentans bemidjiense (strain ATCC BAA-1014 / DSM 16622 / JCM 12645 / Bem) (Geobacter bemidjiensis)).